The sequence spans 59 residues: UPF0291 protein CPR_1073 (59 aa).

The tract at residues 1 to 30 is disordered; the sequence is MNIDELTKRINELHKKHKEEGLSEDEHKER.

Belongs to the UPF0291 family.

Its subcellular location is the cytoplasm. The protein is UPF0291 protein CPR_1073 of Clostridium perfringens (strain SM101 / Type A).